Here is a 285-residue protein sequence, read N- to C-terminus: Hypersensitive-induced response protein 3 (285 aa).

Glycine 2 carries N-myristoyl glycine lipidation. Coiled-coil stretches lie at residues 113-139 and 165-185; these read NLDD…MTAY and NAAA…KIIQ.

In terms of assembly, self-interacts and forms heteromers. Interacts with NB-LRR class of R proteins before R proteins (e.g. RPS2 or RPM1) are activated by the effectors.

The protein resides in the cell membrane. This Arabidopsis thaliana (Mouse-ear cress) protein is Hypersensitive-induced response protein 3 (HIR3).